A 962-amino-acid polypeptide reads, in one-letter code: pH-response regulator protein palF/prr-3 (962 aa).

4 disordered regions span residues 1-43 (MGPF…DSST), 225-326 (APPK…THPS), 568-675 (TDSN…PDEN), and 689-962 (RLLP…RYER). Residues 237 to 246 (ISKRAKKKRP) show a composition bias toward basic residues. Composition is skewed to polar residues over residues 297-307 (GFSQAPRSVSH), 314-326 (SGDS…THPS), and 581-596 (PSLT…SNYV). 2 stretches are compositionally biased toward low complexity: residues 696 to 722 (PIAA…PDSS) and 738 to 747 (PTPAATPATA). Residues 793–805 (TEDKQELERRRLL) are compositionally biased toward basic and acidic residues. Residues 830–839 (AGPSGSRAGP) show a composition bias toward low complexity. Over residues 840 to 849 (SAPPPAPPVA) the composition is skewed to pro residues. Positions 913–928 (PSSPVLAPASAFFPAS) are enriched in low complexity. Over residues 929 to 949 (GSGNVHDSPREQGQQARSDSS) the composition is skewed to polar residues.

This sequence belongs to the arrestin family. PalF/RIM8 subfamily.

Required for the proteolytic cleavage of the transcription factor pacc-1 in response to alkaline ambient pH. This Neurospora crassa (strain ATCC 24698 / 74-OR23-1A / CBS 708.71 / DSM 1257 / FGSC 987) protein is pH-response regulator protein palF/prr-3 (prr-3).